Reading from the N-terminus, the 517-residue chain is Quinol oxidase subunit 1 (517 aa).

12 helical membrane-spanning segments follow: residues 19–39 (VVWL…IAAM), 64–84 (IHGW…VIGF), 98–118 (QMAI…AGSP), 150–170 (MAYL…VTLI), 185–205 (IFAA…PALA), 226–246 (WAIL…FPLF), 271–291 (IYLL…TWPL), 303–323 (TLIL…TIFT), 333–353 (VGMG…QALV), 369–389 (VVGH…TTVF), 412–432 (IGMI…SVAG), and 460–480 (IGIP…LAYA). Histidine 65 provides a ligand contact to Fe(II)-heme a. 4 residues coordinate Cu cation: histidine 235, tyrosine 239, histidine 284, and histidine 285. A cross-link (1'-histidyl-3'-tyrosine (His-Tyr)) is located at residues 235 to 239 (HPVVY). Histidine 372 is a binding site for heme a3. A Fe(II)-heme a-binding site is contributed by histidine 374.

Belongs to the heme-copper respiratory oxidase family.

The protein localises to the cell membrane. It catalyses the reaction 2 a quinol + O2 = 2 a quinone + 2 H2O. Its function is as follows. Catalyzes the reduction of oxygen to water. In terms of biological role, subunits I, II and III form the functional core of the enzyme complex. Electrons originating in caldariella quinol are transferred to the binuclear center formed by heme A3 and Cu(B). Functionally, subunit I binds heme a and the bimetallic center. The sequence is that of Quinol oxidase subunit 1 (soxB) from Sulfolobus acidocaldarius (strain ATCC 33909 / DSM 639 / JCM 8929 / NBRC 15157 / NCIMB 11770).